We begin with the raw amino-acid sequence, 1351 residues long: uncharacterized protein (1351 aa).

The span at 1-17 (MSKKDSKNSPKKSKDTN) shows a compositional bias: basic and acidic residues. A disordered region spans residues 1–31 (MSKKDSKNSPKKSKDTNSDESSSSNAETSSD). The span at 19–31 (DESSSSNAETSSD) shows a compositional bias: low complexity.

This is an uncharacterized protein from Acanthamoeba polyphaga mimivirus (APMV).